A 675-amino-acid polypeptide reads, in one-letter code: Metal-nicotianamine transporter YSL3 (675 aa).

14 helical membrane-spanning segments follow: residues 42-62 (ITFR…VIVM), 66-86 (LTTG…FVFL), 114-134 (CAVA…LLGL), 159-179 (GIGW…LALV), 219-239 (VFGF…QWFF), 280-300 (IVNI…WPLI), 325-345 (VFIS…KILF), 386-406 (IPLW…IIAI), 408-428 (IMFP…APSL), 450-470 (VALF…AGLV), 504-524 (VSQA…FFLF), 556-576 (FSAL…FAVA), 602-622 (FLVG…VFAW), and 630-650 (AGLM…LWIL).

The protein belongs to the YSL (TC 2.A.67.2) family. In terms of tissue distribution, expressed in leaves, anthers and pollen grains. Restricted to the vasculature.

The protein resides in the membrane. Functionally, may be involved in the lateral transport of nicotianamine-chelated metals in the vasculature. The sequence is that of Metal-nicotianamine transporter YSL3 (YSL3) from Arabidopsis thaliana (Mouse-ear cress).